The chain runs to 89 residues: Small ribosomal subunit protein uS14 (89 aa).

It belongs to the universal ribosomal protein uS14 family. Part of the 30S ribosomal subunit. Contacts proteins S3 and S10.

Functionally, binds 16S rRNA, required for the assembly of 30S particles and may also be responsible for determining the conformation of the 16S rRNA at the A site. This Lacticaseibacillus casei (strain BL23) (Lactobacillus casei) protein is Small ribosomal subunit protein uS14.